Consider the following 509-residue polypeptide: Maturase K (509 aa).

This sequence belongs to the intron maturase 2 family. MatK subfamily.

The protein resides in the plastid. Its subcellular location is the chloroplast. In terms of biological role, usually encoded in the trnK tRNA gene intron. Probably assists in splicing its own and other chloroplast group II introns. The sequence is that of Maturase K from Solanum bulbocastanum (Wild potato).